A 275-amino-acid polypeptide reads, in one-letter code: Dermonecrotic toxin SpaSicTox-betaIIA3 (275 aa).

His-5 is an active-site residue. Mg(2+) contacts are provided by Glu-25 and Asp-27. The Nucleophile role is filled by His-41. Cystine bridges form between Cys-45/Cys-51 and Cys-47/Cys-190. Asp-85 contributes to the Mg(2+) binding site.

It belongs to the arthropod phospholipase D family. Class II subfamily. It depends on Mg(2+) as a cofactor. Expressed by the venom gland.

The protein localises to the secreted. It catalyses the reaction an N-(acyl)-sphingosylphosphocholine = an N-(acyl)-sphingosyl-1,3-cyclic phosphate + choline. It carries out the reaction an N-(acyl)-sphingosylphosphoethanolamine = an N-(acyl)-sphingosyl-1,3-cyclic phosphate + ethanolamine. The catalysed reaction is a 1-acyl-sn-glycero-3-phosphocholine = a 1-acyl-sn-glycero-2,3-cyclic phosphate + choline. The enzyme catalyses a 1-acyl-sn-glycero-3-phosphoethanolamine = a 1-acyl-sn-glycero-2,3-cyclic phosphate + ethanolamine. In terms of biological role, dermonecrotic toxins cleave the phosphodiester linkage between the phosphate and headgroup of certain phospholipids (sphingolipid and lysolipid substrates), forming an alcohol (often choline) and a cyclic phosphate. This toxin acts on sphingomyelin (SM). It may also act on ceramide phosphoethanolamine (CPE), lysophosphatidylcholine (LPC) and lysophosphatidylethanolamine (LPE), but not on lysophosphatidylserine (LPS), and lysophosphatidylglycerol (LPG). It acts by transphosphatidylation, releasing exclusively cyclic phosphate products as second products. Induces dermonecrosis, hemolysis, increased vascular permeability, edema, inflammatory response, and platelet aggregation. This Sicarius patagonicus (Six-eyed sand spider) protein is Dermonecrotic toxin SpaSicTox-betaIIA3.